Reading from the N-terminus, the 151-residue chain is Mating pheromone 3 (151 aa).

Positions 1–16 (MKAIFIILAILMVTQA) are cleaved as a signal peptide. Residues 17–52 (FKMTSKVNTKLQSQIQSKFQSKNKLASTFQTSSQLK) constitute a propeptide that is removed on maturation.

The protein localises to the secreted. In terms of biological role, mating ciliate pheromones (or gamones) are diffusible extracellular communication signals that distinguish different intraspecific classes of cells commonly referred to as 'mating types'. They prepare the latter for conjugation by changing their cell surface properties. The protein is Mating pheromone 3 (PHR3) of Euplotoides octocarinatus (Freshwater ciliate).